Here is a 785-residue protein sequence, read N- to C-terminus: Endonuclease MutS2 (785 aa).

Residue 335 to 342 (GPNTGGKT) coordinates ATP. Positions 710 to 785 (LDLRGERYEN…GSGVTIVELK (76 aa)) constitute a Smr domain.

The protein belongs to the DNA mismatch repair MutS family. MutS2 subfamily. As to quaternary structure, homodimer. Binds to stalled ribosomes, contacting rRNA.

In terms of biological role, endonuclease that is involved in the suppression of homologous recombination and thus may have a key role in the control of bacterial genetic diversity. Its function is as follows. Acts as a ribosome collision sensor, splitting the ribosome into its 2 subunits. Detects stalled/collided 70S ribosomes which it binds and splits by an ATP-hydrolysis driven conformational change. Acts upstream of the ribosome quality control system (RQC), a ribosome-associated complex that mediates the extraction of incompletely synthesized nascent chains from stalled ribosomes and their subsequent degradation. Probably generates substrates for RQC. This Bacillus velezensis (strain DSM 23117 / BGSC 10A6 / LMG 26770 / FZB42) (Bacillus amyloliquefaciens subsp. plantarum) protein is Endonuclease MutS2.